We begin with the raw amino-acid sequence, 194 residues long: Holliday junction branch migration complex subunit RuvA (194 aa).

Residues 1 to 64 (MIGRLRGILA…EDSVSLYGFL (64 aa)) are domain I. Positions 65–140 (REGERRLFRD…RAADFSSGAP (76 aa)) are domain II. A flexible linker region spans residues 140–144 (PITGQ). The interval 145-194 (LGPDAVSEATVALQQLGYKPAEAARMARDAGAEGDEVATVIRKALQAALR) is domain III.

Belongs to the RuvA family. In terms of assembly, homotetramer. Forms an RuvA(8)-RuvB(12)-Holliday junction (HJ) complex. HJ DNA is sandwiched between 2 RuvA tetramers; dsDNA enters through RuvA and exits via RuvB. An RuvB hexamer assembles on each DNA strand where it exits the tetramer. Each RuvB hexamer is contacted by two RuvA subunits (via domain III) on 2 adjacent RuvB subunits; this complex drives branch migration. In the full resolvosome a probable DNA-RuvA(4)-RuvB(12)-RuvC(2) complex forms which resolves the HJ.

The protein localises to the cytoplasm. In terms of biological role, the RuvA-RuvB-RuvC complex processes Holliday junction (HJ) DNA during genetic recombination and DNA repair, while the RuvA-RuvB complex plays an important role in the rescue of blocked DNA replication forks via replication fork reversal (RFR). RuvA specifically binds to HJ cruciform DNA, conferring on it an open structure. The RuvB hexamer acts as an ATP-dependent pump, pulling dsDNA into and through the RuvAB complex. HJ branch migration allows RuvC to scan DNA until it finds its consensus sequence, where it cleaves and resolves the cruciform DNA. The protein is Holliday junction branch migration complex subunit RuvA of Xanthomonas axonopodis pv. citri (strain 306).